A 453-amino-acid chain; its full sequence is tRNA modification GTPase MnmE (453 aa).

Positions 22, 79, and 119 each coordinate (6S)-5-formyl-5,6,7,8-tetrahydrofolate. The 162-residue stretch at 215–376 folds into the TrmE-type G domain; the sequence is GMKVVIAGRP…LKQHLKSLMG (162 aa). Asn-225 contributes to the K(+) binding site. Residues 225 to 230, 244 to 250, 269 to 272, and 334 to 337 contribute to the GTP site; these read NAGKSS, TEIAGTT, DTAG, and NKAD. A Mg(2+)-binding site is contributed by Ser-229. 3 residues coordinate K(+): Thr-244, Ile-246, and Thr-249. Thr-250 lines the Mg(2+) pocket. Position 453 (Lys-453) interacts with (6S)-5-formyl-5,6,7,8-tetrahydrofolate.

This sequence belongs to the TRAFAC class TrmE-Era-EngA-EngB-Septin-like GTPase superfamily. TrmE GTPase family. Homodimer. Heterotetramer of two MnmE and two MnmG subunits. The cofactor is K(+).

The protein localises to the cytoplasm. In terms of biological role, exhibits a very high intrinsic GTPase hydrolysis rate. Involved in the addition of a carboxymethylaminomethyl (cmnm) group at the wobble position (U34) of certain tRNAs, forming tRNA-cmnm(5)s(2)U34. The chain is tRNA modification GTPase MnmE from Shewanella oneidensis (strain ATCC 700550 / JCM 31522 / CIP 106686 / LMG 19005 / NCIMB 14063 / MR-1).